A 443-amino-acid chain; its full sequence is Phosphoglucosamine mutase (443 aa).

The active-site Phosphoserine intermediate is Ser-101. Positions 101, 239, 241, and 243 each coordinate Mg(2+). Residue Ser-101 is modified to Phosphoserine.

The protein belongs to the phosphohexose mutase family. The cofactor is Mg(2+). Activated by phosphorylation.

It catalyses the reaction alpha-D-glucosamine 1-phosphate = D-glucosamine 6-phosphate. Functionally, catalyzes the conversion of glucosamine-6-phosphate to glucosamine-1-phosphate. The sequence is that of Phosphoglucosamine mutase from Francisella tularensis subsp. tularensis (strain FSC 198).